The following is a 242-amino-acid chain: Probable transcriptional regulatory protein PG_0097 (242 aa).

Belongs to the TACO1 family.

The protein localises to the cytoplasm. The polypeptide is Probable transcriptional regulatory protein PG_0097 (Porphyromonas gingivalis (strain ATCC BAA-308 / W83)).